Here is a 192-residue protein sequence, read N- to C-terminus: Phosphoheptose isomerase (192 aa).

The SIS domain occupies 37–192; it reads ITDSFKNGGK…MMLIEFEMAK (156 aa). A substrate-binding site is contributed by 52 to 54; the sequence is NGG. Zn(2+) contacts are provided by histidine 61 and glutamate 65. Residues glutamate 65, 93–94, 119–121, serine 124, and glutamine 172 contribute to the substrate site; these read ND and STS. Positions 172 and 180 each coordinate Zn(2+).

The protein belongs to the SIS family. GmhA subfamily. Homotetramer. Zn(2+) is required as a cofactor.

It localises to the cytoplasm. The enzyme catalyses 2 D-sedoheptulose 7-phosphate = D-glycero-alpha-D-manno-heptose 7-phosphate + D-glycero-beta-D-manno-heptose 7-phosphate. Its pathway is carbohydrate biosynthesis; D-glycero-D-manno-heptose 7-phosphate biosynthesis; D-glycero-alpha-D-manno-heptose 7-phosphate and D-glycero-beta-D-manno-heptose 7-phosphate from sedoheptulose 7-phosphate: step 1/1. In terms of biological role, catalyzes the isomerization of sedoheptulose 7-phosphate in D-glycero-D-manno-heptose 7-phosphate. The polypeptide is Phosphoheptose isomerase (Glaesserella parasuis serovar 5 (strain SH0165) (Haemophilus parasuis)).